Here is a 426-residue protein sequence, read N- to C-terminus: Histidine--tRNA ligase (426 aa).

Belongs to the class-II aminoacyl-tRNA synthetase family. In terms of assembly, homodimer.

The protein localises to the cytoplasm. The catalysed reaction is tRNA(His) + L-histidine + ATP = L-histidyl-tRNA(His) + AMP + diphosphate + H(+). This is Histidine--tRNA ligase from Legionella pneumophila (strain Lens).